Here is a 488-residue protein sequence, read N- to C-terminus: G-patch domain and KOW motifs-containing protein (488 aa).

A compositionally biased stretch (pro residues) spans 1–11 (MAGRESPPPSA). Positions 1–20 (MAGRESPPPSAPSMAPISFG) are disordered. An N-acetylalanine modification is found at Ala2. Ser25 carries the phosphoserine; by PKA modification. The disordered stretch occupies residues 72-97 (IQNGSRRQPLSKNPKPSSETSTVLMS). Polar residues predominate over residues 73–95 (QNGSRRQPLSKNPKPSSETSTVL). A Phosphoserine modification is found at Ser115. Residues 164–210 (VEAYGLAMLRGMGWKPGKGIGNTFSQVVKPRVNSIRPKGLGLGANRM) form the G-patch domain. 2 disordered regions span residues 216 to 241 (ASVG…PQGL) and 295 to 367 (QEFD…PRNK). A compositionally biased stretch (basic and acidic residues) spans 224 to 236 (PRPDGDRENDKEG). Residues 231 to 258 (ENDKEGQPQGLMHGRAVVVLSGPYRGLY) enclose the KOW 1 domain. Over residues 307 to 331 (VSQTSTEQQNRATGTASSLKAAQNQ) the composition is skewed to polar residues. Basic and acidic residues-rich tracts occupy residues 332-341 (EDSKRRQKGS) and 349-363 (PDRQ…EKAA). The 28-residue stretch at 401 to 428 (PDTCVCRTDEGRVLEDVREDMLETLIPK) folds into the KOW 2 domain. Residue Ser485 is modified to Phosphoserine.

The protein belongs to the MOS2 family. In terms of assembly, component of the minor spliceosome, which splices U12-type introns. Interacts with PRKX, PRKACB and DHX16. Post-translationally, phosphorylation regulates its ability to bind RNA.

The protein localises to the nucleus. Functionally, RNA-binding protein involved in pre-mRNA splicing. As a component of the minor spliceosome, involved in the splicing of U12-type introns in pre-mRNAs. This Mus musculus (Mouse) protein is G-patch domain and KOW motifs-containing protein (Gpkow).